We begin with the raw amino-acid sequence, 231 residues long: Biosynthetic peptidoglycan transglycosylase (231 aa).

A helical transmembrane segment spans residues 7–27 (LLFWLILVPILLVLLMQLYFF).

It belongs to the glycosyltransferase 51 family.

The protein resides in the cell inner membrane. The catalysed reaction is [GlcNAc-(1-&gt;4)-Mur2Ac(oyl-L-Ala-gamma-D-Glu-L-Lys-D-Ala-D-Ala)](n)-di-trans,octa-cis-undecaprenyl diphosphate + beta-D-GlcNAc-(1-&gt;4)-Mur2Ac(oyl-L-Ala-gamma-D-Glu-L-Lys-D-Ala-D-Ala)-di-trans,octa-cis-undecaprenyl diphosphate = [GlcNAc-(1-&gt;4)-Mur2Ac(oyl-L-Ala-gamma-D-Glu-L-Lys-D-Ala-D-Ala)](n+1)-di-trans,octa-cis-undecaprenyl diphosphate + di-trans,octa-cis-undecaprenyl diphosphate + H(+). Its pathway is cell wall biogenesis; peptidoglycan biosynthesis. Peptidoglycan polymerase that catalyzes glycan chain elongation from lipid-linked precursors. This Herminiimonas arsenicoxydans protein is Biosynthetic peptidoglycan transglycosylase.